The primary structure comprises 796 residues: Protocadherin beta-3 (796 aa).

A signal peptide spans 1 to 26 (MEAGGERFLRQRQVLLLFVFLGGSLA). Topologically, residues 27–690 (GSESRRYSVA…AQADLLTVYL (664 aa)) are extracellular. 5 consecutive Cadherin domains span residues 35-133 (VAEE…SPVF), 138-242 (MHLK…APEF), 247-347 (YEVA…PPEL), 352-451 (VNSP…APAF), and 456-561 (YTLF…SPFV). An N-linked (GlcNAc...) asparagine glycan is attached at N169. Residues N418 and N436 are each glycosylated (N-linked (GlcNAc...) asparagine). N567 carries an N-linked (GlcNAc...) asparagine glycan. The region spanning 568-671 (GSAPCTELVP…LVDGFSQPYL (104 aa)) is the Cadherin 6 domain. The chain crosses the membrane as a helical span at residues 691-711 (VVALASVSSLFLFSVLLFVAV). The Cytoplasmic segment spans residues 712 to 796 (RLCRRSRAAS…PSFRKSFEFS (85 aa)).

The protein localises to the cell membrane. Functionally, potential calcium-dependent cell-adhesion protein. May be involved in the establishment and maintenance of specific neuronal connections in the brain. This chain is Protocadherin beta-3 (PCDHB3), found in Homo sapiens (Human).